The primary structure comprises 535 residues: Keratin, type II cytoskeletal 79 (535 aa).

Over residues Met-1 to Thr-12 the composition is skewed to polar residues. A disordered region spans residues Met-1–Pro-52. Residues Met-1–Gln-141 form a head region. Residues Ser-32 to Ser-42 are compositionally biased toward low complexity. Residues Gly-43 to Pro-52 show a composition bias toward gly residues. The interval Glu-142–Leu-177 is coil 1A. In terms of domain architecture, IF rod spans Glu-142–Met-457. The linker 1 stretch occupies residues Gln-178–Tyr-198. Positions Leu-199–Val-290 are coil 1B. The tract at residues Gln-291–Ile-314 is linker 12. The segment at Ile-315–Glu-453 is coil 2. The tail stretch occupies residues Glu-454–Tyr-535.

Belongs to the intermediate filament family. As to quaternary structure, heterotetramer of two type I and two type II keratins. Expressed in skeletal muscle, skin and scalp, but not in any other tissues or organs examined.

The chain is Keratin, type II cytoskeletal 79 (KRT79) from Homo sapiens (Human).